A 222-amino-acid chain; its full sequence is Bone marrow proteoglycan (222 aa).

A signal peptide spans 1 to 16 (MKLPLLLALLFGAVSA). A propeptide spans 17-105 (LHLRSETSTF…VKVVGIPGCQ (89 aa)) (acidic). O-linked (GalNAc...) threonine; partial glycosylation occurs at Thr23. Ser24 is a glycosylation site (O-linked (GalNAc...) serine). Thr25 carries an O-linked (GalNAc...) threonine glycan. Residues 25 to 75 (TFETPLGAKTLPEDEETPEQEMEETPCRELEEEEEWGSGSEDASKKDGAVE) form a disordered region. O-linked (GalNAc...) threonine; partial glycosylation occurs at Thr34. Positions 37-60 (EDEETPEQEMEETPCRELEEEEEW) are enriched in acidic residues. An O-linked (Xyl...) (chondroitin sulfate) serine glycan is attached at Ser62. Asn86 carries N-linked (GlcNAc...) asparagine glycosylation. Positions 104–222 (CQTCRYLLVR…LRRLPFICSY (119 aa)) constitute a C-type lectin domain. 2 disulfide bridges follow: Cys125–Cys220 and Cys197–Cys212.

In terms of assembly, in pregnancy serum, the proform exists as a disulfide-linked 2:2 heterotetramer with PAPPA, as a disulfide-linked 2:2 heterotetramer with AGT, and as a complex (probably a 2:2:2 heterohexamer) with AGT and C3dg. In terms of processing, nitrated. Detected in plasma and urine (at protein level). Detected in placenta (at protein level). High levels of the proform in placenta and pregnancy serum; in placenta, localized to X cells of septa and anchoring villi. Lower levels in a variety of other tissues including kidney, myometrium, endometrium, ovaries, breast, prostate, bone marrow and colon.

Its subcellular location is the secreted. The protein resides in the cytoplasmic vesicle. It is found in the secretory vesicle. Functionally, cytotoxin and helminthotoxin. Also induces non-cytolytic histamine release from human basophils. Involved in antiparasitic defense mechanisms and immune hypersensitivity reactions. The proform acts as a proteinase inhibitor, reducing the activity of PAPPA. This Homo sapiens (Human) protein is Bone marrow proteoglycan (PRG2).